Here is a 599-residue protein sequence, read N- to C-terminus: Beta-glucuronidase (599 aa).

D-glucuronate is bound by residues Asp160 and Asn407. Glu408 (proton donor) is an active-site residue. Asn462, Tyr468, Glu501, Trp546, and Lys565 together coordinate D-glucuronate. The active-site Nucleophile is the Glu501. The short motif at 563–565 is the N-K motif element; the sequence is NHK.

This sequence belongs to the glycosyl hydrolase 2 family.

It carries out the reaction a beta-D-glucuronoside + H2O = D-glucuronate + an alcohol. Its activity is regulated as follows. Inhibited by a set of synthetic compounds like thio-urea derivatives and analogs. Inhibitors of gut microbial beta-glucuronidases are expected to block the reactivation of glucuronidated cancer drugs, and to alleviate drug-induced GI toxicity. Functionally, displays beta-glucuronidase activity with the artificial substrate p-nitrophenyl-beta-D-glucuronide (PNPG). Is likely capable of scavenging glucuronate from a range of chemically distinct xenobiotic and endobiotic glucuronides present in the gastrointestinal (GI) tract, to be able to utilize these diverse sources of carbon. As part of the GI microbiome, this enzyme would be able to reactivate glucuronide drug conjugates, such reactivated compounds can significantly damage the GI tract. The protein is Beta-glucuronidase of Streptococcus agalactiae serotype V (strain ATCC BAA-611 / 2603 V/R).